Reading from the N-terminus, the 119-residue chain is Large ribosomal subunit protein bL19 (119 aa).

The protein belongs to the bacterial ribosomal protein bL19 family.

In terms of biological role, this protein is located at the 30S-50S ribosomal subunit interface and may play a role in the structure and function of the aminoacyl-tRNA binding site. In Treponema denticola (strain ATCC 35405 / DSM 14222 / CIP 103919 / JCM 8153 / KCTC 15104), this protein is Large ribosomal subunit protein bL19.